A 537-amino-acid polypeptide reads, in one-letter code: Arginine--tRNA ligase (537 aa).

Residues 113–123 (ANPTGRIHLGH) carry the 'HIGH' region motif.

The protein belongs to the class-I aminoacyl-tRNA synthetase family. In terms of assembly, monomer.

It localises to the cytoplasm. The enzyme catalyses tRNA(Arg) + L-arginine + ATP = L-arginyl-tRNA(Arg) + AMP + diphosphate. The chain is Arginine--tRNA ligase (argS) from Mycoplasma genitalium (strain ATCC 33530 / DSM 19775 / NCTC 10195 / G37) (Mycoplasmoides genitalium).